The sequence spans 153 residues: Arginine regulator (153 aa).

The protein belongs to the ArgR family.

It is found in the cytoplasm. Its pathway is amino-acid degradation; L-arginine degradation via ADI pathway. Regulates the transcription of the arc operon, involved in arginine catabolism. This Lactiplantibacillus plantarum (strain ATCC BAA-793 / NCIMB 8826 / WCFS1) (Lactobacillus plantarum) protein is Arginine regulator (argR1).